Consider the following 225-residue polypeptide: MSETAPAPAAEAAPAAAPAPAKAAAKKPKKAAGGAKARKPAGPSVTELITKAVSASKERKGLSLAALKKALAAGGYDVEKNNSRIKLGLKSLVSKGTLVQTKGTGASGSFRLSKKPGEVKEKAPKKKASAAKPKKPAAKKPAAAAKKPKKAVAVKKSPKKAKKPAASATKKSAKSPKKVTKAVKPKKAVAAKSPAKAKAVKPKAAKPKAAKPKAAKAKKAAAKKK.

Low complexity-rich tracts occupy residues 1-23 (MSET…PAKA) and 31-43 (AAGG…PAGP). 2 disordered regions span residues 1 to 46 (MSET…PSVT) and 94 to 225 (SKGT…AKKK). At S2 the chain carries N-acetylserine. Residues 41–114 (AGPSVTELIT…GASGSFRLSK (74 aa)) enclose the H15 domain. 4 stretches are compositionally biased toward basic residues: residues 123–138 (APKK…KPAA), 146–163 (KKPK…KAKK), 171–189 (KSAK…KKAV), and 198–225 (KAVK…AKKK).

This sequence belongs to the histone H1/H5 family.

It localises to the nucleus. Its subcellular location is the chromosome. Histones H1 are necessary for the condensation of nucleosome chains into higher-order structures. The sequence is that of Histone H1.11L from Gallus gallus (Chicken).